Here is a 525-residue protein sequence, read N- to C-terminus: GMP synthase [glutamine-hydrolyzing] (525 aa).

Residues 9–207 (RILILDFGSQ…VRDICQCEAL (199 aa)) form the Glutamine amidotransferase type-1 domain. Cysteine 86 functions as the Nucleophile in the catalytic mechanism. Catalysis depends on residues histidine 181 and glutamate 183. Positions 208 to 400 (WTPAKIIDDA…LGLPYDMLYR (193 aa)) constitute a GMPS ATP-PPase domain. ATP is bound at residue 235–241 (SGGVDSS).

As to quaternary structure, homodimer.

The catalysed reaction is XMP + L-glutamine + ATP + H2O = GMP + L-glutamate + AMP + diphosphate + 2 H(+). Its pathway is purine metabolism; GMP biosynthesis; GMP from XMP (L-Gln route): step 1/1. Its function is as follows. Catalyzes the synthesis of GMP from XMP. This chain is GMP synthase [glutamine-hydrolyzing], found in Klebsiella pneumoniae subsp. pneumoniae (strain ATCC 700721 / MGH 78578).